The following is a 135-amino-acid chain: Small ribosomal subunit protein bS16 (135 aa).

Positions 105-120 (DEKKKPVLKPKTEKAA) are enriched in basic and acidic residues. A disordered region spans residues 105–135 (DEKKKPVLKPKTEKAAPEAAAPEAEATEEQA).

This sequence belongs to the bacterial ribosomal protein bS16 family.

The sequence is that of Small ribosomal subunit protein bS16 from Clavibacter sepedonicus (Clavibacter michiganensis subsp. sepedonicus).